A 430-amino-acid polypeptide reads, in one-letter code: Serine--tRNA ligase (430 aa).

231–233 contacts L-serine; the sequence is TSE. 262–264 is an ATP binding site; the sequence is RSE. Glu285 provides a ligand contact to L-serine. Residue 349–352 coordinates ATP; that stretch reads EISS. Residue Ser385 participates in L-serine binding.

It belongs to the class-II aminoacyl-tRNA synthetase family. Type-1 seryl-tRNA synthetase subfamily. In terms of assembly, homodimer. The tRNA molecule binds across the dimer.

It is found in the cytoplasm. It catalyses the reaction tRNA(Ser) + L-serine + ATP = L-seryl-tRNA(Ser) + AMP + diphosphate + H(+). The catalysed reaction is tRNA(Sec) + L-serine + ATP = L-seryl-tRNA(Sec) + AMP + diphosphate + H(+). The protein operates within aminoacyl-tRNA biosynthesis; selenocysteinyl-tRNA(Sec) biosynthesis; L-seryl-tRNA(Sec) from L-serine and tRNA(Sec): step 1/1. Functionally, catalyzes the attachment of serine to tRNA(Ser). Is also able to aminoacylate tRNA(Sec) with serine, to form the misacylated tRNA L-seryl-tRNA(Sec), which will be further converted into selenocysteinyl-tRNA(Sec). In Roseobacter denitrificans (strain ATCC 33942 / OCh 114) (Erythrobacter sp. (strain OCh 114)), this protein is Serine--tRNA ligase.